The primary structure comprises 437 residues: Nuclear envelope integral membrane protein 1 (437 aa).

Positions 1-44 (MAGGIKVSVWSAVGPGPRCWGAGGGGGATWLLLVVAGCVVCGSA) are cleaved as a signal peptide. An N-linked (GlcNAc...) asparagine glycan is attached at N123. Helical transmembrane passes span 159–179 (PKLF…DLLS), 183–203 (IFYY…IVIF), 214–234 (PIYV…QLVF), 244–264 (YWHY…AVCY), and 288–308 (GLMY…VIAL). The tract at residues 184 to 295 (FYYSTGMSVG…GLGLMYSSIQ (112 aa)) is a; required for its colocalization with lamins at the nuclear envelope. The segment at 334–403 (PVPPRLLTEE…LTPNEVSVHE (70 aa)) is b; required for interaction with RAN-GTP. The interval 334-437 (PVPPRLLTEE…PTFTQNNFLT (104 aa)) is required for nuclear localization. S366, S419, and S420 each carry phosphoserine. The segment covering 415–425 (DEELSSEEEGS) has biased composition (acidic residues). Residues 415–437 (DEELSSEEEGSEYPTFTQNNFLT) form a disordered region. The segment covering 428 to 437 (PTFTQNNFLT) has biased composition (polar residues).

This sequence belongs to the NEMP family. Homooligomer. Interacts with RAN-GTP. Interacts with EMD. In terms of processing, phosphorylated. Phosphorylation may regulate its interaction with RAN-GTP. In terms of tissue distribution, in the ovary, expression is strongest in primordial follicle oocytes and rapidly declines as oocytes mature and move from the cortex (at protein level).

The protein localises to the nucleus inner membrane. The protein resides in the nucleus envelope. Together with EMD, contributes to nuclear envelope stiffness in germ cells. Required for female fertility. Essential for normal erythropoiesis. Required for efficient nuclear envelope opening and enucleation during the late stages of erythroblast maturation. The sequence is that of Nuclear envelope integral membrane protein 1 (Nemp1) from Mus musculus (Mouse).